Reading from the N-terminus, the 185-residue chain is Translation initiation factor IF-3, chloroplastic (185 aa).

The protein belongs to the IF-3 family. As to quaternary structure, monomer.

The protein resides in the plastid. Its subcellular location is the chloroplast. Its function is as follows. IF-3 binds to the 30S ribosomal subunit and shifts the equilibrium between 70S ribosomes and their 50S and 30S subunits in favor of the free subunits, thus enhancing the availability of 30S subunits on which protein synthesis initiation begins. The chain is Translation initiation factor IF-3, chloroplastic from Cyanidium caldarium (Red alga).